A 547-amino-acid chain; its full sequence is MGKVNVAKLRYMSRDDFRVLTAVEMGMKNHEIVPCSLIASIASLKHGGCNKILRELVKHKLIAWERTKTVQGYRLTNAGYDYLALKTLSSRQVVESVGNQMGVGKESDIYIVANEAGQQLALKLHRLGRTSFRNLKNKRDYHKHRHNVSWLYLSRLSAMKEFAYMKALYERKFPVPKPIDYNRHAVIMELINGYPLCQIHHVEDPASVYDEAMELIVKLGNHGLIHGDFNEFNLMLDKDDHITMIDFPQMVSTSHPNAEWYFDRDVKCIREFFMKRFSYESELYPTFSDIRKEDSLDVEVSASGYTKEMQADDELLHPVGPDDKITETEEDSDFTFSDEEMLEKAKVWRSELEKEADPADESGGSWCCSSTDSKQIKDGGLPEESAHVSSFEVTALSQAVEEMERQVLPHRSVTEFSEESRRTENDGQPGQRSPAGSEDCDDEPPHLIALSSVNREFRPFRDEESMSSVTRHRTRTLSVTSAGSALSCSTIPPELVKQKVKRQLTRQQKAAARRRLQKGEANVFTKQRRENMQNIKSSLEAASFWGD.

Residues 97-273 (VGNQMGVGKE…RDVKCIREFF (177 aa)) enclose the Protein kinase domain. Lys-123 serves as a coordination point for ATP. Catalysis depends on Asp-228, which acts as the Proton acceptor. 6 positions are modified to phosphoserine: Ser-332, Ser-337, Ser-350, Ser-362, Ser-385, and Ser-390. Residues 352 to 385 (LEKEADPADESGGSWCCSSTDSKQIKDGGLPEES) are disordered. The Nuclear export signal signature appears at 399 to 408 (AVEEMERQVL). The interval 404–445 (ERQVLPHRSVTEFSEESRRTENDGQPGQRSPAGSEDCDDEPP) is disordered. A phosphoserine mark is found at Ser-412, Ser-417, Ser-433, Ser-437, and Ser-543.

Belongs to the protein kinase superfamily. RIO-type Ser/Thr kinase family. As to quaternary structure, associated with late 40S pre-ribosomal particles. Interacts with PLK1 (via its N-terminus). It depends on Mg(2+) as a cofactor. Autophosphorylated (in vitro). Phosphorylation affects the timing of the metaphase-anaphase transition.

It is found in the cytoplasm. The enzyme catalyses L-seryl-[protein] + ATP = O-phospho-L-seryl-[protein] + ADP + H(+). It carries out the reaction L-threonyl-[protein] + ATP = O-phospho-L-threonyl-[protein] + ADP + H(+). In terms of biological role, serine/threonine-protein kinase involved in the final steps of cytoplasmic maturation of the 40S ribosomal subunit. Involved in export of the 40S pre-ribosome particles (pre-40S) from the nucleus to the cytoplasm. Its kinase activity is required for the release of NOB1, PNO1 and LTV1 from the late pre-40S and the processing of 18S-E pre-rRNA to the mature 18S rRNA. May regulate the timing of the metaphase-anaphase transition during mitotic progression, and its phosphorylation, may regulate this function. The polypeptide is Serine/threonine-protein kinase RIO2 (Riok2) (Mus musculus (Mouse)).